We begin with the raw amino-acid sequence, 1250 residues long: MWLSPEEVLVANALWVTERANPFFVLQRRRGHGRGGGLTGLLVGTLDVVLDSSARVAPYRILHQTQDSQVYWTVACGSSRKEITKHWEWLENNLLQTLSIFDSEEDITTFVKGKIHGIIAEENKNLQPQGDEDPGKFKEAELKMRKQFGMPEGEKLVNYYSCSYWKGRVPRQGWLYLTVNHLCFYSFLLGKEVSLVVQWVDITRLEKNATLLFPESIRVDTRDQELFFSMFLNIGETFKLMEQLANLAMRQLLDSEGFLEDKALPRPIRPHRNISALKRDLDARAKNECYRATFRLPRDERLDGHTSCTLWTPFNKLHIPGQMFISNNYICFASKEEDACHLIIPLREVTIVEKADSSSVLPSPLSISTKSKMTFLFANLKDRDFLVQRISDFLQKTPSKQPGSIGSRKASVVDPSTESSPAPQEGSEQPASPASPLSSRQSFCAQEAPTASQGLLKLFQKNSPMEDLGAKGAKEKMKEESWHIHFFEYGRGVCMYRTAKTRALVLKGIPESLRGELWLLFSGAWNEMVTHPGYYAELVEKSTGKYSLATEEIERDLHRSMPEHPAFQNELGIAALRRVLTAYAFRNPTIGYCQAMNIVTSVLLLYGSEEEAFWLLVALCERMLPDYYNTRVVGALVDQGIFEELTRDFLPQLSEKMQDLGVISSISLSWFLTLFLSVMPFESAVVIVDCFFYEGIKVILQVALAVLDANMEQLLGCSDEGEAMTMLGRYLDNVVNKQSVSPPIPHLRALLSSSDDPPAEVDIFELLKVSYEKFSSLRAEDIEQMRFKQRLKVIQSLEDTAKRSVVRAIPVDIGFSIEELEDLYMVFKAKHLASQYWGCSRTMAGRRDPSLPYLEQYRIDASQFRELFASLTPWACGSHTPLLAGRMFRLLDENKDSLINFKEFVTGMSGMYHGDLTEKLKVLYKLHLPPALSPEEAESALEAAHYFTEDSSSEASPLASDLDLFLPWEAQEALPQEEQEGSGSEERGEEKGTSSPDYRHYLRMWAKEKEAQKETIKDLPKMNQEQFIELCKTLYNMFSEDPMEQDLYHAIATVASLLLRIGEVGKKFSARTGRKPRDCATEEDEPPAPELHQDAARELQPPAAGDPQAKAGGDTHLGKAPQESQVVVEGGSGEGQGSPSQLLSDDETKDDMSMSSYSVVSTGSLQCEDLADDTVLVGGEACSPTARIGGTVDTDWCISFEQILASILTESVLVNFFEKRVDIGLKIKDQKKVERQFSTASDHEQPGVSG.

GRAM domains lie at 142 to 209 and 288 to 356; these read LKMR…EKNA and ECYR…EKAD. Thr397 bears the Phosphothreonine mark. The disordered stretch occupies residues 397 to 443; that stretch reads TPSKQPGSIGSRKASVVDPSTESSPAPQEGSEQPASPASPLSSRQSF. Residues Ser411, Ser432, Ser435, and Ser463 each carry the phosphoserine modification. Positions 414–443 are enriched in polar residues; the sequence is DPSTESSPAPQEGSEQPASPASPLSSRQSF. The 188-residue stretch at 508–695 folds into the Rab-GAP TBC domain; sequence GIPESLRGEL…VIVDCFFYEG (188 aa). A helical transmembrane segment spans residues 668–688; the sequence is LSWFLTLFLSVMPFESAVVIV. An EF-hand domain is found at 879-914; that stretch reads HTPLLAGRMFRLLDENKDSLINFKEFVTGMSGMYHG. 3 disordered regions span residues 974 to 999, 1069 to 1093, and 1128 to 1157; these read LPQE…PDYR, SART…ELHQ, and VEGG…MSSY. Residues 984–999 show a composition bias toward basic and acidic residues; it reads SEERGEEKGTSSPDYR. Position 1241 is a phosphoserine (Ser1241).

The protein resides in the membrane. Functionally, may act as a GTPase-activating protein for Rab family protein(s). This chain is TBC1 domain family member 9B (TBC1D9B), found in Homo sapiens (Human).